Here is a 281-residue protein sequence, read N- to C-terminus: Elongation factor Ts (281 aa).

An involved in Mg(2+) ion dislocation from EF-Tu region spans residues 79–82 (TDFV).

This sequence belongs to the EF-Ts family.

It localises to the cytoplasm. Associates with the EF-Tu.GDP complex and induces the exchange of GDP to GTP. It remains bound to the aminoacyl-tRNA.EF-Tu.GTP complex up to the GTP hydrolysis stage on the ribosome. In Wolbachia pipientis subsp. Culex pipiens (strain wPip), this protein is Elongation factor Ts.